The following is a 385-amino-acid chain: Rubredoxin-NAD(+) reductase (385 aa).

Residues Ala-8 to Ala-11, Ser-32 to Arg-33, Ile-79, Glu-156, Asp-275, and Ile-293 each bind FAD.

It belongs to the FAD-dependent oxidoreductase family. Homodimer. FAD is required as a cofactor.

It is found in the cytoplasm. It carries out the reaction 2 reduced [rubredoxin] + NAD(+) + H(+) = 2 oxidized [rubredoxin] + NADH. The protein operates within hydrocarbon metabolism; alkane degradation. Involved in the hydrocarbon hydroxylating system, which transfers electrons from NADH to rubredoxin reductase and then through rubredoxin to alkane 1 monooxygenase. The protein is Rubredoxin-NAD(+) reductase (alkT) of Pseudomonas putida (Arthrobacter siderocapsulatus).